We begin with the raw amino-acid sequence, 312 residues long: Urease accessory protein 7 (312 aa).

The segment at Q28–E86 is disordered. Residues H36–H87 are histine rich nickel-binding domain. Positions H53–E86 are enriched in basic and acidic residues. The GTP binding P-loop signature appears at G115–T122. The short motif at T147 to L154 is the Switch domain 1 element. The switch domain 2 signature appears at G171–G172.

This sequence belongs to the SIMIBI class G3E GTPase family. UreG subfamily. In terms of assembly, URE4, URE6 and URE7 may form a complex that acts as a GTP-hydrolysis-dependent molecular chaperone, activating the urease apoprotein URE1.

Its function is as follows. Urease accessory protein that binds 2 nickel atoms likely via its conserved histidine-rich domain and supplies nickel for the functional urease URE1. Has probably a dual function as a nickel chaperone and GTPase. Plays a role in host brain invasion. The sequence is that of Urease accessory protein 7 from Cryptococcus neoformans var. grubii serotype A (strain H99 / ATCC 208821 / CBS 10515 / FGSC 9487) (Filobasidiella neoformans var. grubii).